We begin with the raw amino-acid sequence, 159 residues long: Outer envelope pore protein 16-3, chloroplastic/mitochondrial (159 aa).

The residue at position 1 (Met-1) is an N-acetylmethionine. Residues Met-1–His-65 are contains beta strands. 3 helical membrane passes run Ile-24–Trp-40, Met-62–Val-79, and Phe-92–Tyr-109.

This sequence belongs to the Tim17/Tim22/Tim23 family. Plastid outer envelope porin OEP16 (TC 1.B.30) subfamily. Homodimer and oligomers in membrane. Part of both the NADH-ubiquinone oxidoreductase complex I and of the TIM17:23 complex. Interacts with TIM23-2.

It localises to the plastid. The protein localises to the chloroplast outer membrane. Its subcellular location is the mitochondrion outer membrane. It is found in the mitochondrion inner membrane. Voltage-dependent high-conductance channel with a slight cation-selectivity; selective for amino acids but excludes triosephosphates or uncharged sugars. Non-essential amino acid-selective channel protein and translocation pore for NADPH:protochlorophyllide oxidoreductase A (PORA) and possibly PORB. The sequence is that of Outer envelope pore protein 16-3, chloroplastic/mitochondrial (OEP163) from Arabidopsis thaliana (Mouse-ear cress).